Here is a 129-residue protein sequence, read N- to C-terminus: L-ectoine synthase (129 aa).

It belongs to the ectoine synthase family.

It carries out the reaction (2S)-4-acetamido-2-aminobutanoate = L-ectoine + H2O. It participates in amine and polyamine biosynthesis; ectoine biosynthesis; L-ectoine from L-aspartate 4-semialdehyde: step 3/3. Functionally, catalyzes the circularization of gamma-N-acetyl-alpha,gamma-diaminobutyric acid (ADABA) to ectoine (1,4,5,6-tetrahydro-2-methyl-4-pyrimidine carboxylic acid), which is an excellent osmoprotectant. The chain is L-ectoine synthase from Desulfosudis oleivorans (strain DSM 6200 / JCM 39069 / Hxd3) (Desulfococcus oleovorans).